A 1072-amino-acid polypeptide reads, in one-letter code: Netrin receptor unc-5 (1072 aa).

An N-terminal signal peptide occupies residues M1–G30. At E31–L440 the chain is on the extracellular side. The tract at residues L77–S100 is disordered. An N-linked (GlcNAc...) asparagine glycan is attached at N79. Positions P128–T224 constitute an Ig-like domain. 5 disulfides stabilise this stretch: C149/C207, C253/C303, C336/C375, C338/C378, and C352/C364. The 83-residue stretch at K232 to S314 folds into the Ig-like C2-type domain. An N-linked (GlcNAc...) asparagine glycan is attached at N300. 2 consecutive TSP type-1 domains span residues N324–P379 and M398–Q499. A helical membrane pass occupies residues L441 to V461. Over G462 to I1072 the chain is Cytoplasmic. The 149-residue stretch at S654–P802 folds into the ZU5 domain. Positions L980 to I1067 constitute a Death domain.

The protein belongs to the unc-5 family. In terms of processing, phosphorylated on different cytoplasmic tyrosine residues. In terms of tissue distribution, prior to gastrulation, it is strongly expressed in the presumptive mesoderm. Mesodermal expression begins to fade during stages 13-14, persisting only in the cells that form the dorsal vessel. Expressed within the CNS from late stage 13, shortly after the first axons have extended. Detected in several dispersed clusters of cells within the CNS, increasing in number as development proceeds. Also expressed in the peripheral and exit glia, which migrate laterally out of the CNS between stages 14 and 17. Strongly expressed in motor axons that exit the CNS ipsilaterally via the segmental nerve root (SN). Not expressed on either commissural or longitudinal axons within the CNS, nor on motor axons that exit via the intersegmental nerve (ISN). In the periphery, it is detected on all branches of the SN. Also expressed at high level in exit and peripheral glia along both the SN and ISN.

The protein resides in the membrane. Its function is as follows. Receptor for netrin required for motor axon guidance. Mediates both short- and long-range axon motor repulsion in the developing nervous system upon ligand binding. Also involved in glial migration. While short-range repulsion requires both fra and unc-5, long-range repulsion only requires unc-5. The sequence is that of Netrin receptor unc-5 (unc-5) from Drosophila melanogaster (Fruit fly).